A 376-amino-acid chain; its full sequence is Glutamate 5-kinase (376 aa).

K15 is an ATP binding site. Substrate is bound by residues S55, D142, and N154. ATP-binding positions include 174-175 (TD) and 216-222 (TGGMATK). The 79-residue stretch at 281–359 (AGKVLVDAGA…AEIEQLLGYR (79 aa)) folds into the PUA domain.

This sequence belongs to the glutamate 5-kinase family.

The protein resides in the cytoplasm. It catalyses the reaction L-glutamate + ATP = L-glutamyl 5-phosphate + ADP. It functions in the pathway amino-acid biosynthesis; L-proline biosynthesis; L-glutamate 5-semialdehyde from L-glutamate: step 1/2. Functionally, catalyzes the transfer of a phosphate group to glutamate to form L-glutamate 5-phosphate. In Trichlorobacter lovleyi (strain ATCC BAA-1151 / DSM 17278 / SZ) (Geobacter lovleyi), this protein is Glutamate 5-kinase.